A 377-amino-acid polypeptide reads, in one-letter code: Peptidyl-prolyl cis-trans isomerase D (377 aa).

Residues 11-178 enclose the PPIase cyclophilin-type domain; the sequence is YFDIQIGSQK…TDVTIVDCGE (168 aa). 3 TPR repeats span residues 220 to 253, 273 to 306, and 314 to 347; these read ASEL…LNEF, FTLH…ADAA, and AKAY…APGD.

The protein belongs to the cyclophilin-type PPIase family. PPIase D subfamily.

It is found in the cytoplasm. It catalyses the reaction [protein]-peptidylproline (omega=180) = [protein]-peptidylproline (omega=0). Functionally, PPIases accelerate the folding of proteins. It catalyzes the cis-trans isomerization of proline imidic peptide bonds in oligopeptides. The chain is Peptidyl-prolyl cis-trans isomerase D (cpr6) from Aspergillus fumigatus (strain ATCC MYA-4609 / CBS 101355 / FGSC A1100 / Af293) (Neosartorya fumigata).